The following is a 415-amino-acid chain: DNA primase DnaG (415 aa).

The 80-residue stretch at 171–250 (DAIIIVEGRA…AFSPRGKSVE (80 aa)) folds into the Toprim domain. Glutamate 177, aspartate 219, and aspartate 221 together coordinate Mg(2+). The tract at residues 280-323 (ELPGDLGGRPARTAPAHDEGGNSDTTGKQAVSQKRIRDGTSKVP) is disordered. The segment covering 301 to 311 (NSDTTGKQAVS) has biased composition (polar residues).

It belongs to the archaeal DnaG primase family. Forms a ternary complex with MCM helicase and DNA. Requires Mg(2+) as cofactor.

The catalysed reaction is ssDNA + n NTP = ssDNA/pppN(pN)n-1 hybrid + (n-1) diphosphate.. Functionally, RNA polymerase that catalyzes the synthesis of short RNA molecules used as primers for DNA polymerase during DNA replication. This chain is DNA primase DnaG, found in Methanoregula boonei (strain DSM 21154 / JCM 14090 / 6A8).